A 141-amino-acid chain; its full sequence is HTH-type transcriptional repressor NsrR (141 aa).

The HTH rrf2-type domain maps to 2-129 (QLTSFTDYGL…DNYTLADLVE (128 aa)). A DNA-binding region (H-T-H motif) is located at residues 28–51 (ISEVTEVYGVSRNHMVKIINQLSR). [2Fe-2S] cluster contacts are provided by Cys-91, Cys-96, and Cys-102.

[2Fe-2S] cluster is required as a cofactor.

In terms of biological role, nitric oxide-sensitive repressor of genes involved in protecting the cell against nitrosative stress. May require iron for activity. In Salmonella choleraesuis (strain SC-B67), this protein is HTH-type transcriptional repressor NsrR.